The primary structure comprises 353 residues: GTPase Obg (353 aa).

The region spanning 1–159 (MKFLDEAKVY…RWIWLRLKLI (159 aa)) is the Obg domain. One can recognise an OBG-type G domain in the interval 160-327 (ADAGLVGLPN…VLRALVAVIG (168 aa)). Residues 166–173 (GLPNAGKS), 191–195 (FTTLH), 212–215 (DIPG), 279–282 (NKID), and 308–310 (SGV) contribute to the GTP site. 2 residues coordinate Mg(2+): S173 and T193.

The protein belongs to the TRAFAC class OBG-HflX-like GTPase superfamily. OBG GTPase family. As to quaternary structure, monomer. Mg(2+) serves as cofactor.

Its subcellular location is the cytoplasm. An essential GTPase which binds GTP, GDP and possibly (p)ppGpp with moderate affinity, with high nucleotide exchange rates and a fairly low GTP hydrolysis rate. Plays a role in control of the cell cycle, stress response, ribosome biogenesis and in those bacteria that undergo differentiation, in morphogenesis control. The sequence is that of GTPase Obg from Rhodopseudomonas palustris (strain TIE-1).